A 281-amino-acid chain; its full sequence is CDAN1-interacting nuclease 1 (281 aa).

At Thr-114 the chain carries Phosphothreonine.

The protein resides in the nucleus. It localises to the cytoplasm. Plays a role in erythroid cell differentiation. The sequence is that of CDAN1-interacting nuclease 1 from Homo sapiens (Human).